Consider the following 543-residue polypeptide: MCASPSTAPGFFNPRPQSGAELSAFDIGLSRSMGLGVPPHSAWHEPPASLGGHLHAASAGPGTTTGSVATGGGGTTPSSVASQQSAVIKQDLSCPSLNQAGSGHHPGIKEDLSSSLPSANGGSAGGHHSGSGSGSGSGVNPGHGSDMLPLIKGHGQDMLTSIKGQPTGCGSTTPSSQANSSHSQSSNSGSQIDSKQNIECVVCGDKSSGKHYGQFTCEGCKSFFKRSVRRNLTYSCRGSRNCPIDQHHRNQCQYCRLKKCLKMGMRREAVQRGRVPPTQPGLAGMHGQYQIANGDPMGIAGFNGHSYLSSYISLLLRAEPYPTSRYGQCMQPNNIMGIDNICELAARLLFSAVEWAKNIPFFPELQVTDQVALLRLVWSELFVLNASQCSMPLHVAPLLAAAGLHASPMAADRVVAFMDHIRIFQEQVEKLKALHVDSAEYSCLKAIVLFTTDACGLSDVTHIESLQEKSQCALEEYCRTQYPNQPTRFGKLLLRLPSLRTVSSQVIEQLFFVRLVGKTPIETLIRDMLLSGNSFSWPYLPSM.

The interval 38–191 (PPHSAWHEPP…HSQSSNSGSQ (154 aa)) is disordered. Low complexity predominate over residues 56 to 68 (AASAGPGTTTGSV). A compositionally biased stretch (polar residues) spans 83 to 101 (QQSAVIKQDLSCPSLNQAG). The segment covering 122-141 (GSAGGHHSGSGSGSGSGVNP) has biased composition (gly residues). Polar residues predominate over residues 158–170 (MLTSIKGQPTGCG). Low complexity predominate over residues 171–191 (STTPSSQANSSHSQSSNSGSQ). A DNA-binding region (nuclear receptor) is located at residues 197 to 272 (NIECVVCGDK…MGMRREAVQR (76 aa)). 2 consecutive NR C4-type zinc fingers follow at residues 200–220 (CVVC…CEGC) and 236–260 (CRGS…LKKC). An NR LBD domain is found at 307-532 (YLSSYISLLL…TLIRDMLLSG (226 aa)).

The protein belongs to the nuclear hormone receptor family. NR2 subfamily. In terms of tissue distribution, expressed in several embryonic tissues; dorsal vessel, oenocyte and fat body. CNS expression is dynamic and confined to temporally restricted subsections of the NB lineage; expressed in many NB and GMCs, but only a small number of neurons.

The protein localises to the nucleus. Its function is as follows. Receptor that is required in photoreceptors R1, R3, R4 and R6 during eye development; generation of the ganglion mother cell-2 (GMC-2) fate in the nb7-3 lineage, coinciding with the transition in the expression of HB to KR in the neuroblasts (NBs). In Drosophila melanogaster (Fruit fly), this protein is Steroid receptor seven-up, isoforms B/C (svp).